The primary structure comprises 205 residues: Basonuclin zinc finger protein homolog (205 aa).

C2H2-type zinc fingers lie at residues 107 to 130 (VACD…SAVH) and 135 to 164 (HTCT…PKLH). Residues 145 to 168 (QFSSRRSRNRHSSNNNPKLHMPES) are disordered.

Expressed in the VA and VB motor neurons and at lower levels in the SABV neuron pair.

The protein resides in the nucleus. Its function is as follows. Probable transcription factor. Involved in motor neuron fate determination and maintenance, acting as a transcriptional repressor to counteract gene activation by transcription factor unc-3 in a subset of motor neurons. Required throughout development to repress transcription by unc-3, probably acting by binding to specific promoter elements. Represses expression of DA and DB motor neuron-specific effector genes, such as unc-129 and unc-53, in VA and VB motor neurons. In Caenorhabditis elegans, this protein is Basonuclin zinc finger protein homolog.